The chain runs to 1150 residues: MQGRPNGASGDPNPRNDTSVTIDSDSDNGSRHRIAEVRGSSPSQIVPEKATILNDKVKAGPCLSTEKDLGIRKQLALSHTESIIASNPIAVMPLESPKQRLAMESSTESHRLRRARTRNPWICSGLVLFVTVSALLILSIIVYSYQSLQVDPQGCRTPSMRPTYIKLVGFDSEHTRFASKYGLYLYRERGVDEYSEEDIGIKGVPVLFLPGNAGSYKQGRSLASEASLYFHDVLQYHQERLKTGVRGLDFFMADFNEDMAAFHGQTLLDQAEYVNDALAYILSLYHDPRRPGRDLNLPDPTSVILIGHSMGGIVARTVLTMSNYQTNSVNTIITMSTPHARPPVSFDSDLVHTYKQVNNYWREAYSQKWANNNPLWHVTLISIAGGGGDTIVPSDYTSLSSLVPETHGFTVFTTTIPNVWTGMDHLSIAWCDSFRKVIIRSLFDVIDVRRSSQTKQRADRMSVFKKWYLTGMEVSAERKLPRKEHTTLLTLGDDTKSKSILRQDEKLTLRGFGHRKGPKSHLMPIPPRGGVPEKKLTLLTDQKLNSMETNRKLDVLFCSDFPLRAGQSATLPSLNLDLSGGSASSIRLVCKSAAEDVISLPTSTSSSKFAFDNVPSLSYLQYDLEDLTEYQFVVVIDKAETRYPGWLHAEFSDSSDSVIPTRVGLGRLLSAGLNIRLPAERPMVIDIKVPALHSSLLAYKLHVESKDCDGTELFKPMVRQYISGPYESKFFVNVRDAEINLHGIAPYMPPHIGDNAAATGISFQLWSDASCNGPLQLSLKVDVLGSMGKLAMRYRTVFAAFPLLVVSLVLRQQFKVYNQTGIFISFMQALDLCIRSSIPLLFLGLTFLASSLATSKNTLSKSASPNAGSNSTESVIDFSANDLLLGSQDAFFWFLVPLFGIISIGTCVIVNYVAMILIHALGAIRAILMSRKGYIKHDERGNTSIFWSLSTKNRVINTAVLLLFVATFIPYQFAYVVACVVQLVTCVQASWHARETRSASHSSFYNYVHSIFILMIWILPINVLVLIVWIHDLAVHWLTPFSSNHNVFSILPFMLLVETLTCGTMIPRITTHLRHITYVLFFFLAAYSAIYGVTYAYLLHHITNLVIAWLVGIHFFAGGFSLRNLSRVINDSDGVPNGSPITDGHIKKLP.

A disordered region spans residues 1–43 (MQGRPNGASGDPNPRNDTSVTIDSDSDNGSRHRIAEVRGSSPS). Asparagine 16 and asparagine 28 each carry an N-linked (GlcNAc...) asparagine glycan. A helical transmembrane segment spans residues 122-142 (ICSGLVLFVTVSALLILSIIV). Serine 309 is a catalytic residue. The chain crosses the membrane as a helical span at residues 790-810 (LAMRYRTVFAAFPLLVVSLVL). Asparagine 818 carries N-linked (GlcNAc...) asparagine glycosylation. A helical membrane pass occupies residues 829–849 (ALDLCIRSSIPLLFLGLTFLA). Asparagine 870 carries an N-linked (GlcNAc...) asparagine glycan. The helical transmembrane segment at 890-910 (AFFWFLVPLFGIISIGTCVIV) threads the bilayer. Asparagine 942 carries an N-linked (GlcNAc...) asparagine glycan. Helical transmembrane passes span 960–980 (VLLL…VACV), 1010–1030 (SIFI…IVWI), 1047–1067 (VFSI…TMIP), 1079–1099 (VLFF…AYLL), and 1102–1122 (ITNL…GFSL). Asparagine 1124 and asparagine 1130 each carry an N-linked (GlcNAc...) asparagine glycan.

Belongs to the GPI inositol-deacylase family.

The protein resides in the endoplasmic reticulum membrane. Involved in inositol deacylation of GPI-anchored proteins which plays important roles in the quality control and ER-associated degradation of GPI-anchored proteins. The sequence is that of GPI inositol-deacylase (BST1) from Coccidioides immitis (strain RS) (Valley fever fungus).